The primary structure comprises 120 residues: MSAVPLTRMLPLRFLTHLLLLSFIPLYFCMEFSEDARNIEKIRRGNQWAIGHFMGKKSLQDTYNPSEQDMDSEDFRPRIIEMIRGTFRQEPIRALSPRKQDEIQWMLKKIMDDYIKTTQK.

A signal peptide spans Met-1 to Cys-29. Positions Met-30–Arg-44 are excised as a propeptide. Met-54 carries the methionine amide modification. A propeptide spanning residues Ser-58–Lys-120 is cleaved from the precursor.

It belongs to the bombesin/neuromedin-B/ranatensin family. In terms of tissue distribution, brain, intestine, and ovaries and early embryos (stages 2 and 10).

The protein localises to the secreted. In terms of biological role, stimulates smooth muscle contraction. This is Neuromedin-B (nmb) from Xenopus laevis (African clawed frog).